The sequence spans 511 residues: Aprataxin and PNK-like factor (511 aa).

An FHA-like domain is found at Met1–Glu108. Ser116 bears the Phosphoserine; by ATM mark. Residue Ser149 is modified to Phosphoserine. The short motif at Arg182–Leu191 is the KBM element. Positions Lys223 to Glu370 are disordered. 2 stretches are compositionally biased toward polar residues: residues Gln225–Gln249 and Ser263–Arg293. Basic residues predominate over residues Val304 to Pro315. The span at Cys324 to His344 shows a compositional bias: polar residues. A compositionally biased stretch (low complexity) spans Ser345 to Glu355. A glycoprotein is bound by residues Arg376, Tyr381, Tyr386, and Arg387. A PBZ-type 1 zinc finger spans residues Thr377–His398. Positions Gly406–Asp416 are flexible linker. Residues Pro419 to His440 form a PBZ-type 2 zinc finger. A glycoprotein-binding residues include Tyr423, Tyr428, and Arg429. Residues Leu449–Val497 form a disordered region. The segment covering Phe468–Val497 has biased composition (acidic residues). Residues Tyr476–Leu500 carry the NAP1L motif motif. The stretch at Pro487–Lys511 forms a coiled coil.

This sequence belongs to the APLF family. As to quaternary structure, interacts with LIG4. Interacts with PARP1. Interacts with XRCC4. Interacts (via KBM motif) with XRCC5 and XRCC6; promoting recruitment to DNA damage sites. Interacts with XRCC1. Interacts (via C-terminal disordered region) with histones; interacts with histone H2A, H2B and H3-H4. In terms of processing, poly-ADP-ribosylated. In addition to binding non covalently poly-ADP-ribose via its PBZ-type zinc fingers, the protein is also covalently poly-ADP-ribosylated by PARP1. Phosphorylated in an ATM-dependent manner upon double-strand DNA break.

The protein resides in the nucleus. The protein localises to the chromosome. It is found in the cytoplasm. It localises to the cytosol. In terms of biological role, histone chaperone involved in single-strand and double-strand DNA break repair. Recruited to sites of DNA damage through interaction with branched poly-ADP-ribose chains, a polymeric post-translational modification synthesized transiently at sites of chromosomal damage to accelerate DNA strand break repair reactions. Following recruitment to DNA damage sites, acts as a histone chaperone that mediates histone eviction during DNA repair and promotes recruitment of histone variant MACROH2A1. Also has a nuclease activity: displays apurinic-apyrimidinic (AP) endonuclease and 3'-5' exonuclease activities in vitro. Also able to introduce nicks at hydroxyuracil and other types of pyrimidine base damage. Together with PARP3, promotes the retention of the LIG4-XRCC4 complex on chromatin and accelerate DNA ligation during non-homologous end-joining (NHEJ). Also acts as a negative regulator of cell pluripotency by promoting histone exchange. Required for the embryo implantation during the epithelial to mesenchymal transition in females. This is Aprataxin and PNK-like factor from Homo sapiens (Human).